The chain runs to 306 residues: Zinc finger protein 625 (306 aa).

The C2H2-type 1; degenerate zinc-finger motif lies at Pro31–Asp53. C2H2-type zinc fingers lie at residues Tyr69–His91, Tyr97–His119, Tyr125–His147, Tyr153–His175, Tyr181–His203, Tyr209–His231, Tyr237–His259, and Tyr265–His287. Tyr209 carries the phosphotyrosine modification. Positions His287–Ala306 are disordered.

The protein belongs to the krueppel C2H2-type zinc-finger protein family.

It is found in the nucleus. Its function is as follows. May be involved in transcriptional regulation. The chain is Zinc finger protein 625 (ZNF625) from Homo sapiens (Human).